Reading from the N-terminus, the 197-residue chain is Guanylate kinase (197 aa).

The region spanning 7–185 is the Guanylate kinase-like domain; the sequence is GLIIILSSPS…TLKKIHEIIV (179 aa). 14–21 contacts ATP; that stretch reads SPSGTGKS.

It belongs to the guanylate kinase family.

It is found in the cytoplasm. It carries out the reaction GMP + ATP = GDP + ADP. In terms of biological role, essential for recycling GMP and indirectly, cGMP. The sequence is that of Guanylate kinase from Rickettsia typhi (strain ATCC VR-144 / Wilmington).